The following is a 292-amino-acid chain: NAD kinase (292 aa).

The active-site Proton acceptor is D64. Residues 64 to 65 (DG), 138 to 139 (ND), R149, R166, D168, 179 to 184 (TGYAVS), and Q238 each bind NAD(+).

This sequence belongs to the NAD kinase family. A divalent metal cation serves as cofactor.

It is found in the cytoplasm. It carries out the reaction NAD(+) + ATP = ADP + NADP(+) + H(+). Functionally, involved in the regulation of the intracellular balance of NAD and NADP, and is a key enzyme in the biosynthesis of NADP. Catalyzes specifically the phosphorylation on 2'-hydroxyl of the adenosine moiety of NAD to yield NADP. This is NAD kinase from Oleidesulfovibrio alaskensis (strain ATCC BAA-1058 / DSM 17464 / G20) (Desulfovibrio alaskensis).